A 375-amino-acid polypeptide reads, in one-letter code: Esterase AN6793 (375 aa).

The tract at residues 138–158 (RHPQPGLDPGHGHRHKRMPPL) is disordered.

The protein belongs to the sidJ hydrolase family. Homodimer.

It functions in the pathway secondary metabolite biosynthesis. Esterase; part of a cluster that mediates the biosynthesis of a yet undetermined secondary metabolite. With the HR-PKS AN6791, produces a pathway intermediate compound with molecular weight 258. This is Esterase AN6793 from Emericella nidulans (strain FGSC A4 / ATCC 38163 / CBS 112.46 / NRRL 194 / M139) (Aspergillus nidulans).